A 161-amino-acid chain; its full sequence is Nuclear transcription factor Y subunit B-3 (161 aa).

Positions 1 to 23 (MADSDNDSGGHKDGGNASTREQD) are disordered. Residue alanine 2 is modified to N-acetylalanine. Residues 8–23 (SGGHKDGGNASTREQD) are compositionally biased toward basic and acidic residues. A DNA-binding region spans residues 26–32 (LPIANVS). A subunit association domain (SAD) region spans residues 53-64 (VQECVSEFISFI). The segment at 114 to 146 (EKTTTAGRQGDKEGGGGGGGAGSGSGGAPMYGG) is disordered. The segment covering 128–146 (GGGGGGAGSGSGGAPMYGG) has biased composition (gly residues).

It belongs to the NFYB/HAP3 subunit family. Heterotrimeric transcription factor composed of three components, NF-YA, NF-YB and NF-YC. NF-YB and NF-YC must interact and dimerize for NF-YA association and DNA binding. Component of a heat stress-inducible transcriptional complex with NF-YA and NF-YB subunits made, at least, of NFYA2, NFYB3 and DPB3-1 in cooperation with DREB2A. Binds directly with DPB3-1. As to expression, ubiquitous. Expressed in seedlings, petioles, hypocotyls, reproductive organ tissues and leaves.

Its subcellular location is the nucleus. The protein localises to the cytoplasm. It localises to the cytosol. Functionally, component of the NF-Y/HAP transcription factor complex. The NF-Y complex stimulates the transcription of various genes by recognizing and binding to a CCAAT motif in promoters. Promotes the expression of heat stress-inducible genes by contributing to the formation of a heat stress-specific transcriptional complex with NF-Y subunits (e.g. DPB3-1, NF-YA2 and NF-YB3) and DREB2A at the promoter of target genes, thus promoting heat tolerance. This Arabidopsis thaliana (Mouse-ear cress) protein is Nuclear transcription factor Y subunit B-3.